The following is a 212-amino-acid chain: Lipid A acyltransferase PagP (212 aa).

The first 24 residues, 1–24 (MYLKRTLITLSLITLPIVPFLSYA), serve as a signal peptide directing secretion. A compositionally biased stretch (polar residues) spans 36-47 (NLAPVTVDSSDP). Residues 36-56 (NLAPVTVDSSDPVSDKQGESW) are disordered. Active-site residues include His-84, Asp-127, and Ser-128.

This sequence belongs to the lipid A palmitoyltransferase family. In terms of assembly, homodimer.

The protein localises to the cell outer membrane. It catalyses the reaction a lipid A + a 1,2-diacyl-sn-glycero-3-phosphocholine = a hepta-acyl lipid A + a 2-acyl-sn-glycero-3-phosphocholine. It carries out the reaction a lipid IVA + a 1,2-diacyl-sn-glycero-3-phosphocholine = a lipid IVB + a 2-acyl-sn-glycero-3-phosphocholine. The catalysed reaction is a lipid IIA + a 1,2-diacyl-sn-glycero-3-phosphocholine = a lipid IIB + a 2-acyl-sn-glycero-3-phosphocholine. Its function is as follows. Transfers a fatty acid residue from the sn-1 position of a phospholipid to the N-linked hydroxyfatty acid chain on the proximal unit of lipid A or its precursors. This is Lipid A acyltransferase PagP from Pectobacterium carotovorum subsp. carotovorum (strain PC1).